The chain runs to 389 residues: 23S rRNA (uracil(747)-C(5))-methyltransferase RlmC (389 aa).

Cys12, Cys20, Cys23, and Cys99 together coordinate [4Fe-4S] cluster. Gln224, Phe253, Glu274, and Asn321 together coordinate S-adenosyl-L-methionine. Cys348 (nucleophile) is an active-site residue.

The protein belongs to the class I-like SAM-binding methyltransferase superfamily. RNA M5U methyltransferase family. RlmC subfamily.

The enzyme catalyses uridine(747) in 23S rRNA + S-adenosyl-L-methionine = 5-methyluridine(747) in 23S rRNA + S-adenosyl-L-homocysteine + H(+). Functionally, catalyzes the formation of 5-methyl-uridine at position 747 (m5U747) in 23S rRNA. The sequence is that of 23S rRNA (uracil(747)-C(5))-methyltransferase RlmC from Shewanella sp. (strain W3-18-1).